Here is a 492-residue protein sequence, read N- to C-terminus: Cholesteryl ester transfer protein (492 aa).

Residues 1 to 17 (MLAVTLLSLALLGSTCA) form the signal peptide. The cysteines at positions 160 and 201 are disulfide-linked. N257 carries an N-linked (GlcNAc...) asparagine glycan.

The protein belongs to the BPI/LBP/Plunc superfamily. BPI/LBP family.

It is found in the secreted. It catalyses the reaction cholesteryl (9Z-octadecenoate)(in) = cholesteryl (9Z-octadecenoate)(out). It carries out the reaction 1,2,3-tri-(9Z-octadecenoyl)-glycerol(in) = 1,2,3-tri-(9Z-octadecenoyl)-glycerol(out). The enzyme catalyses cholesteryl (9Z,12Z)-octadecadienoate(in) = cholesteryl (9Z,12Z)-octadecadienoate(out). In terms of biological role, involved in the transfer of neutral lipids, including cholesteryl ester and triglyceride, among lipoprotein particles. Allows the net movement of cholesteryl ester from high density lipoproteins/HDL to triglyceride-rich very low density lipoproteins/VLDL, and the equimolar transport of triglyceride from VLDL to HDL. Regulates the reverse cholesterol transport, by which excess cholesterol is removed from peripheral tissues and returned to the liver for elimination. The chain is Cholesteryl ester transfer protein from Cricetulus griseus (Chinese hamster).